Here is a 396-residue protein sequence, read N- to C-terminus: Phosphoglycerate kinase (396 aa).

Residues 23-25 (DFN), Arg38, 61-64 (HMGK), Arg122, and Arg155 contribute to the substrate site. ATP is bound by residues Lys206, Gly296, Glu327, and 353–356 (GGDS).

It belongs to the phosphoglycerate kinase family. Monomer.

It localises to the cytoplasm. The catalysed reaction is (2R)-3-phosphoglycerate + ATP = (2R)-3-phospho-glyceroyl phosphate + ADP. It participates in carbohydrate degradation; glycolysis; pyruvate from D-glyceraldehyde 3-phosphate: step 2/5. The chain is Phosphoglycerate kinase from Clostridium botulinum (strain Alaska E43 / Type E3).